The sequence spans 317 residues: MSTQYLNSNLKVFSLNSNKELAEQIAKHIGVGLGKCSVDRFSDGEVQINIEESIRGCDVFIIQSTSFPVNEHIMELLIMIDALKRASAKTINIVIPYYGYARQDRKARSREPITSKLVANLLETAGATRVITLDLHAPQIQGFFDIPIDHLMGVPILSDYFETKGLKDIVIVSPDHGGVTRARKMADRLKAPIAIIDKRRPRPNVSEVMNIIGNIEGKTALLIDDIIDTAGTITLAANALVENGASEVYACCTHPVLSGPAIERIQNSNIKELVVTNSIVLPEEKKIDKVHELSVAPLIGEAIIRVYEEESVSVLFN.

ATP-binding positions include 43–45 (DGE) and 102–103 (RQ). 2 residues coordinate Mg(2+): His-136 and Asp-175. The active site involves Lys-198. D-ribose 5-phosphate is bound by residues Arg-200, Asp-224, and 228–232 (DTAGT).

The protein belongs to the ribose-phosphate pyrophosphokinase family. Class I subfamily. As to quaternary structure, homohexamer. Mg(2+) is required as a cofactor.

It localises to the cytoplasm. It catalyses the reaction D-ribose 5-phosphate + ATP = 5-phospho-alpha-D-ribose 1-diphosphate + AMP + H(+). Its pathway is metabolic intermediate biosynthesis; 5-phospho-alpha-D-ribose 1-diphosphate biosynthesis; 5-phospho-alpha-D-ribose 1-diphosphate from D-ribose 5-phosphate (route I): step 1/1. Involved in the biosynthesis of the central metabolite phospho-alpha-D-ribosyl-1-pyrophosphate (PRPP) via the transfer of pyrophosphoryl group from ATP to 1-hydroxyl of ribose-5-phosphate (Rib-5-P). The sequence is that of Ribose-phosphate pyrophosphokinase from Corynebacterium ammoniagenes (Brevibacterium ammoniagenes).